Here is a 738-residue protein sequence, read N- to C-terminus: Protein ALEX (738 aa).

6 disordered regions span residues 1–105 (MSPS…EEAM), 155–188 (REDYSPPPEESVPFQLDGEEFGGDSPPPDSASHA), 237–350 (TTFP…LPKP), 387–516 (MSGQ…LGQP), 528–578 (GEPG…LDPP), and 611–689 (GMRL…RPRI). The span at 257-273 (GSTTTPLSIWTAPQSQV) shows a compositional bias: polar residues. Over residues 279-301 (KSREPQLRASTQRDPHLSDKQPR) the composition is skewed to basic and acidic residues. A compositionally biased stretch (polar residues) spans 387 to 396 (MSGQNQTEGQ). Composition is skewed to pro residues over residues 410–438 (QPPPPPPSQPPSQPLSQPPSQPPSQPPSQ), 448–467 (PSLPPGQSPTPKRSPQPRQP), and 476–485 (PGQPPSPLRS). Composition is skewed to low complexity over residues 542 to 564 (PSLPAQQLPPEQPLLPAQSLPAG), 615 to 626 (RPASARSSPPAM), and 656 to 671 (ATRSATSSPEPSEAAS).

Belongs to the ALEX family. As to quaternary structure, interacts with the N-terminal region of the XLas isoforms of guanine nucleotide-binding protein G(s) subunit alpha.

It localises to the cell membrane. It is found in the cell projection. The protein resides in the ruffle. Its function is as follows. May inhibit the adenylyl cyclase-stimulating activity of guanine nucleotide-binding protein G(s) subunit alpha which is produced from the same locus in a different open reading frame. The protein is Protein ALEX of Rattus norvegicus (Rat).